Consider the following 105-residue polypeptide: Translation initiation factor 1A 2 (105 aa).

The tract at residues 1-22 (MRKRREGSAAPSTQEVTRVRTP) is disordered. Positions 17–91 (TRVRTPRKEN…TKADVIWKYT (75 aa)) constitute an S1-like domain.

It belongs to the eIF-1A family.

In terms of biological role, seems to be required for maximal rate of protein biosynthesis. Enhances ribosome dissociation into subunits and stabilizes the binding of the initiator Met-tRNA(I) to 40 S ribosomal subunits. The protein is Translation initiation factor 1A 2 (eIF1A2) of Methanosarcina acetivorans (strain ATCC 35395 / DSM 2834 / JCM 12185 / C2A).